The sequence spans 65 residues: Putative beta-neurotoxin RjAa4 (65 aa).

Residues 1-64 (KEGYPMGRDG…VWDSSTNKCG (64 aa)) enclose the LCN-type CS-alpha/beta domain. Intrachain disulfides connect C11–C63, C15–C37, C22–C44, and C26–C46.

Belongs to the long (4 C-C) scorpion toxin superfamily. Sodium channel inhibitor family. Beta subfamily. As to expression, expressed by the venom gland.

The protein localises to the secreted. Functionally, beta toxins bind voltage-independently at site-4 of sodium channels (Nav) and shift the voltage of activation toward more negative potentials thereby affecting sodium channel activation and promoting spontaneous and repetitive firing. This is Putative beta-neurotoxin RjAa4 from Rhopalurus junceus (Caribbean blue scorpion).